The following is a 141-amino-acid chain: Hemoglobin subunit alpha (141 aa).

One can recognise a Globin domain in the interval 1–141 (VLSPADKTNV…VSTVLTSKYR (141 aa)). Position 3 is a phosphoserine (serine 3). Lysine 7 carries the N6-succinyllysine modification. Threonine 8 carries the phosphothreonine modification. Lysine 11 bears the N6-succinyllysine mark. Position 16 is an N6-acetyllysine; alternate (lysine 16). Lysine 16 bears the N6-succinyllysine; alternate mark. Tyrosine 24 carries the post-translational modification Phosphotyrosine. The residue at position 40 (lysine 40) is an N6-succinyllysine. A Phosphoserine modification is found at serine 49. Histidine 58 contacts O2. Position 87 (histidine 87) interacts with heme b. At serine 102 the chain carries Phosphoserine. Phosphothreonine is present on threonine 108. Serine 124 is subject to Phosphoserine. A phosphothreonine mark is found at threonine 134 and threonine 137. A Phosphoserine modification is found at serine 138.

This sequence belongs to the globin family. Heterotetramer of two alpha chains and two beta chains. In terms of tissue distribution, red blood cells.

Involved in oxygen transport from the lung to the various peripheral tissues. Functionally, hemopressin acts as an antagonist peptide of the cannabinoid receptor CNR1. Hemopressin-binding efficiently blocks cannabinoid receptor CNR1 and subsequent signaling. The polypeptide is Hemoglobin subunit alpha (HBA) (Phoca vitulina (Harbor seal)).